We begin with the raw amino-acid sequence, 510 residues long: ATP synthase subunit alpha (510 aa).

169 to 176 serves as a coordination point for ATP; the sequence is GDRQTGKT.

This sequence belongs to the ATPase alpha/beta chains family. F-type ATPases have 2 components, CF(1) - the catalytic core - and CF(0) - the membrane proton channel. CF(1) has five subunits: alpha(3), beta(3), gamma(1), delta(1), epsilon(1). CF(0) has four main subunits: a(1), b(1), b'(1) and c(9-12).

The protein localises to the cell inner membrane. It catalyses the reaction ATP + H2O + 4 H(+)(in) = ADP + phosphate + 5 H(+)(out). In terms of biological role, produces ATP from ADP in the presence of a proton gradient across the membrane. The alpha chain is a regulatory subunit. The chain is ATP synthase subunit alpha from Rhodopseudomonas palustris (strain HaA2).